We begin with the raw amino-acid sequence, 250 residues long: Pyrroloquinoline-quinone synthase (250 aa).

This sequence belongs to the PqqC family.

The catalysed reaction is 6-(2-amino-2-carboxyethyl)-7,8-dioxo-1,2,3,4,7,8-hexahydroquinoline-2,4-dicarboxylate + 3 O2 = pyrroloquinoline quinone + 2 H2O2 + 2 H2O + H(+). Its pathway is cofactor biosynthesis; pyrroloquinoline quinone biosynthesis. Ring cyclization and eight-electron oxidation of 3a-(2-amino-2-carboxyethyl)-4,5-dioxo-4,5,6,7,8,9-hexahydroquinoline-7,9-dicarboxylic-acid to PQQ. The protein is Pyrroloquinoline-quinone synthase of Xanthomonas euvesicatoria pv. vesicatoria (strain 85-10) (Xanthomonas campestris pv. vesicatoria).